We begin with the raw amino-acid sequence, 172 residues long: Bone marrow stromal antigen 2 (172 aa).

Residues 1 to 30 lie on the Cytoplasmic side of the membrane; the sequence is MAPSFYHYLPVPMDEMGGKQGWGSHRQWLG. A helical; Signal-anchor for type II membrane protein membrane pass occupies residues 31 to 51; that stretch reads AAILVVLFGVTLVILTIYFAV. Residues 52–152 lie on the Extracellular side of the membrane; it reads TANSVACRDG…ETSSTVQVNS (101 aa). Residue N70 is glycosylated (N-linked (GlcNAc...) asparagine). Residues 74–147 adopt a coiled-coil conformation; sequence LLQRQLTRTQ…LRIQKETSST (74 aa). N94 carries an N-linked (GlcNAc...) asparagine; atypical glycan. N97 carries an N-linked (GlcNAc...) asparagine glycan. S152 carries GPI-anchor amidated serine lipidation. Positions 153–172 are cleaved as a propeptide — removed in mature form; sequence GSSMVVSSLLVLKVSLFLLF.

In terms of assembly, parallel homodimer; disulfide-linked. May form homotetramers under reducing conditions. Isoform 1 and isoform 2 form homodimers and also heterodimers with each other. Dimerization is essential for its antiviral activity. Interacts (via cytoplasmic domain) with ARHGAP44. Interacts with MMP14 (via C-terminal cytoplasmic tail). Interacts with LILRA4/ILT7. Interacts with RNF115. As to expression, in naive mice, specifically expressed on type I interferon-producing cells (at protein level).

It localises to the golgi apparatus. The protein resides in the trans-Golgi network. The protein localises to the cell membrane. Its subcellular location is the late endosome. It is found in the membrane raft. It localises to the cytoplasm. The protein resides in the apical cell membrane. IFN-induced antiviral host restriction factor which efficiently blocks the release of diverse mammalian enveloped viruses by directly tethering nascent virions to the membranes of infected cells. Acts as a direct physical tether, holding virions to the cell membrane and linking virions to each other. The tethered virions can be internalized by endocytosis and subsequently degraded or they can remain on the cell surface. In either case, their spread as cell-free virions is restricted. Its target viruses belong to diverse families, including retroviridae: human immunodeficiency virus type 1 (HIV-1), mouse mammary tumor virus (MMTV) and murine leukemia virus (MLV), filoviridae: ebola virus (EBOV), arenaviridae: lassa virus (LASV), and rhabdoviridae: vesicular stomatitis virus (VSV). Can inhibit cell surface proteolytic activity of MMP14 causing decreased activation of MMP15 which results in inhibition of cell growth and migration. Can stimulate signaling by LILRA4/ILT7 and consequently provide negative feedback to the production of IFN by plasmacytoid dendritic cells in response to viral infection. Plays a role in the organization of the subapical actin cytoskeleton in polarized epithelial cells. The protein is Bone marrow stromal antigen 2 (Bst2) of Mus musculus (Mouse).